The chain runs to 2104 residues: 5'-3' DNA helicase ZGRF1 (2104 aa).

Positions serine 335–glycine 345 are enriched in polar residues. The disordered stretch occupies residues serine 335–valine 359. At serine 336 the chain carries Phosphoserine. A compositionally biased stretch (basic and acidic residues) spans aspartate 347–glutamate 356. A phosphoserine mark is found at serine 793 and serine 864. Residues cysteine 1349, histidine 1351, cysteine 1374, and cysteine 1382 each contribute to the Zn(2+) site. The GRF-type zinc finger occupies cysteine 1349–valine 1391. A disordered region spans residues valine 2085–serine 2104.

Interacts with DNA repair protein RAD51; the interaction promotes RAD51 strand exchange activity. Also interacts with DNA repair proteins EXO1 and BRCA1; the interactions are increased following DNA damage induction.

The protein resides in the nucleus. The enzyme catalyses ATP + H2O = ADP + phosphate + H(+). It carries out the reaction Couples ATP hydrolysis with the unwinding of duplex DNA at the replication fork by translocating in the 5'-3' direction. This creates two antiparallel DNA single strands (ssDNA). The leading ssDNA polymer is the template for DNA polymerase III holoenzyme which synthesizes a continuous strand.. Functionally, 5'-3' DNA helicase which is recruited to sites of DNA damage and promotes repair of replication-blocking DNA lesions through stimulation of homologous recombination (HR). Promotes HR by directly stimulating RAD51-mediated strand exchange activity. Not required to load RAD51 at sites of DNA damage but promotes recombinational repair after RAD51 recruitment. Also promotes HR by positively regulating EXO1-mediated DNA end resection of double-strand breaks. Required for recruitment of replication protein RPA2 to DNA damage sites. Promotes the initiation of the G2/M checkpoint but not its maintenance. Catalyzes Holliday junction branch migration and dissociation of D-loops and DNA flaps. This Homo sapiens (Human) protein is 5'-3' DNA helicase ZGRF1 (ZGRF1).